We begin with the raw amino-acid sequence, 385 residues long: WD repeat-containing protein RUP1 (385 aa).

WD repeat units follow at residues 69–108, 119–160, 163–205, 210–250, 254–292, 298–337, and 348–385; these read TGSDAIGAIEFDPTGEIIATGGIARKIRSYRLSSLLESRD, CTPA…PVSE, EHGG…TLEE, GGGA…DPLI, GHTKTVTYARFMDSHTIVTGSTDGSLKQWDIDNGRRVVR, VNSRNFVGLSVWRHGGLVVSGSENNQVFVYDKRWEEPVWV, and SDRRFVSSVCLRQVDEDWCTLVAGGSDGALEIFSGKQS.

In terms of assembly, interacts with UVR8. Interacts directly with DHU1.

It is found in the nucleus. The protein resides in the cytoplasm. Its subcellular location is the cytosol. Its function is as follows. Functions in association with RUP2 as repressor of UV-B-induced photomorphogenesis mediated by UVR8 and HY5, likely in coordination with DHU1. Plays a crucial negative feedback regulatory role downstream of UVR8-COP1 to inhibit UVR8 function, balance UV-B-specific responses and ensure normal plant growth. Is involved in the regulation of photoperiodic flowering and vegetative development. The sequence is that of WD repeat-containing protein RUP1 from Arabidopsis thaliana (Mouse-ear cress).